We begin with the raw amino-acid sequence, 263 residues long: Endonuclease 8 (263 aa).

The Schiff-base intermediate with DNA role is filled by Pro-2. Glu-3 (proton donor) is an active-site residue. Residue Lys-53 is the Proton donor; for beta-elimination activity of the active site. DNA contacts are provided by Gln-70, Arg-125, and Asn-169. The FPG-type zinc finger occupies 229–263 (KVFHRDGEPCERCGSIIEKTTLSSRPFYWCPGCQH). Arg-253 functions as the Proton donor; for delta-elimination activity in the catalytic mechanism.

This sequence belongs to the FPG family. The cofactor is Zn(2+).

The catalysed reaction is 2'-deoxyribonucleotide-(2'-deoxyribose 5'-phosphate)-2'-deoxyribonucleotide-DNA = a 3'-end 2'-deoxyribonucleotide-(2,3-dehydro-2,3-deoxyribose 5'-phosphate)-DNA + a 5'-end 5'-phospho-2'-deoxyribonucleoside-DNA + H(+). In terms of biological role, involved in base excision repair of DNA damaged by oxidation or by mutagenic agents. Acts as a DNA glycosylase that recognizes and removes damaged bases. Has a preference for oxidized pyrimidines, such as thymine glycol, 5,6-dihydrouracil and 5,6-dihydrothymine. Has AP (apurinic/apyrimidinic) lyase activity and introduces nicks in the DNA strand. Cleaves the DNA backbone by beta-delta elimination to generate a single-strand break at the site of the removed base with both 3'- and 5'-phosphates. The chain is Endonuclease 8 from Escherichia coli (strain K12 / MC4100 / BW2952).